We begin with the raw amino-acid sequence, 862 residues long: DNA topoisomerase 3-beta-1 (862 aa).

A Toprim domain is found at 3–153 (TVLMVAEKPS…EKTVFRARFS (151 aa)). Residues 171-593 (DHNEALSVDA…HTLDVFKRKF (423 aa)) form the Topo IA-type catalytic domain. Tyr336 (O-(5'-phospho-DNA)-tyrosine intermediate) is an active-site residue. Positions 821–851 (PMHRGGPGRRQGRGRGRARRPPGKPNPRRPK) are enriched in basic residues. The segment at 821 to 854 (PMHRGGPGRRQGRGRGRARRPPGKPNPRRPKDKM) is disordered.

It belongs to the type IA topoisomerase family. Isoform 1 is found in testis, heart and skeletal muscle. A 4 kb transcript which probably represents isoform 2 is found in thymus, kidney and pancreas.

The enzyme catalyses ATP-independent breakage of single-stranded DNA, followed by passage and rejoining.. Its function is as follows. Releases the supercoiling and torsional tension of DNA introduced during the DNA replication and transcription by transiently cleaving and rejoining one strand of the DNA duplex. Introduces a single-strand break via transesterification at a target site in duplex DNA. The scissile phosphodiester is attacked by the catalytic tyrosine of the enzyme, resulting in the formation of a DNA-(5'-phosphotyrosyl)-enzyme intermediate and the expulsion of a 3'-OH DNA strand. The free DNA strand than undergoes passage around the unbroken strand thus removing DNA supercoils. Finally, in the religation step, the DNA 3'-OH attacks the covalent intermediate to expel the active-site tyrosine and restore the DNA phosphodiester backbone. Possesses negatively supercoiled DNA relaxing activity. The protein is DNA topoisomerase 3-beta-1 (TOP3B) of Homo sapiens (Human).